Reading from the N-terminus, the 513-residue chain is Histidine ammonia-lyase (513 aa).

Positions Ala142–Gly144 form a cross-link, 5-imidazolinone (Ala-Gly). 2,3-didehydroalanine (Ser) is present on Ser143.

Belongs to the PAL/histidase family. Contains an active site 4-methylidene-imidazol-5-one (MIO), which is formed autocatalytically by cyclization and dehydration of residues Ala-Ser-Gly.

It is found in the cytoplasm. It carries out the reaction L-histidine = trans-urocanate + NH4(+). It participates in amino-acid degradation; L-histidine degradation into L-glutamate; N-formimidoyl-L-glutamate from L-histidine: step 1/3. The sequence is that of Histidine ammonia-lyase from Roseobacter denitrificans (strain ATCC 33942 / OCh 114) (Erythrobacter sp. (strain OCh 114)).